Here is an 85-residue protein sequence, read N- to C-terminus: UPF0291 protein SpyM3_1470 (85 aa).

Residues 62-85 (TPEKLRQVQREKGLHGRSLDDPKS) form a disordered region.

The protein belongs to the UPF0291 family.

It is found in the cytoplasm. The protein is UPF0291 protein SpyM3_1470 of Streptococcus pyogenes serotype M3 (strain ATCC BAA-595 / MGAS315).